The sequence spans 240 residues: Fibronectin type III domain-containing protein 5 (240 aa).

The span at 1–10 (MQAARGGAGR) shows a compositional bias: gly residues. The disordered stretch occupies residues 1 to 33 (MQAARGGAGRPGREGRGLERECERSPGPGVAMP). Positions 11–24 (PGREGRGLERECER) are enriched in basic and acidic residues. One can recognise a Fibronectin type-III domain in the interval 64–155 (APVNVTVRHL…EPVLFKTPRE (92 aa)). Asparagine 67 and asparagine 112 each carry an N-linked (GlcNAc...) asparagine glycan. A helical membrane pass occupies residues 181–201 (GEVLIIVVVLFMWAGVIALFC). The segment covering 210-221 (NEPNNNKEKTKS) has biased composition (basic and acidic residues). The segment at 210–240 (NEPNNNKEKTKSASETSTPEHQGGGLLRSKI) is disordered. Residues 231–240 (QGGGLLRSKI) are compositionally biased toward gly residues. A Microbody targeting signal motif is present at residues 238-240 (SKI).

In terms of assembly, dimer; may exist in other oligomeric forms. Post-translationally, the extracellular domain is cleaved and released from the cell membrane. N-Glycosylated. In adult, it is highly expressed in skeletal muscle, heart and brain.

The protein resides in the cell membrane. It localises to the peroxisome membrane. It is found in the secreted. In terms of biological role, mediates beneficial effects of muscular exercise. Induces browning of white adipose tissue by stimulating UCP1 expression, at least in part, via the nuclear receptor PPARA. The polypeptide is Fibronectin type III domain-containing protein 5 (Fndc5) (Mus musculus (Mouse)).